We begin with the raw amino-acid sequence, 452 residues long: UDP-N-acetylmuramoyl-tripeptide--D-alanyl-D-alanine ligase (452 aa).

107–113 is an ATP binding site; that stretch reads GSSGKTS.

It belongs to the MurCDEF family. MurF subfamily. In terms of assembly, monomer.

It localises to the cytoplasm. The catalysed reaction is D-alanyl-D-alanine + UDP-N-acetyl-alpha-D-muramoyl-L-alanyl-gamma-D-glutamyl-meso-2,6-diaminopimelate + ATP = UDP-N-acetyl-alpha-D-muramoyl-L-alanyl-gamma-D-glutamyl-meso-2,6-diaminopimeloyl-D-alanyl-D-alanine + ADP + phosphate + H(+). Its pathway is cell wall biogenesis; peptidoglycan biosynthesis. In terms of biological role, involved in cell wall formation. Catalyzes the final step in the synthesis of UDP-N-acetylmuramoyl-pentapeptide, the precursor of murein. This Escherichia coli (strain K12) protein is UDP-N-acetylmuramoyl-tripeptide--D-alanyl-D-alanine ligase.